The chain runs to 289 residues: Diaminopimelate epimerase (289 aa).

Residues Asn-11 and Asn-78 each coordinate substrate. Cys-87 functions as the Proton donor in the catalytic mechanism. Residues 88-89 (GN), Asn-163, Asn-199, and 217-218 (ER) each bind substrate. The Proton acceptor role is filled by Cys-226. 227–228 (GT) serves as a coordination point for substrate.

The protein belongs to the diaminopimelate epimerase family. As to quaternary structure, homodimer.

It is found in the cytoplasm. It catalyses the reaction (2S,6S)-2,6-diaminopimelate = meso-2,6-diaminopimelate. It functions in the pathway amino-acid biosynthesis; L-lysine biosynthesis via DAP pathway; DL-2,6-diaminopimelate from LL-2,6-diaminopimelate: step 1/1. In terms of biological role, catalyzes the stereoinversion of LL-2,6-diaminopimelate (L,L-DAP) to meso-diaminopimelate (meso-DAP), a precursor of L-lysine and an essential component of the bacterial peptidoglycan. The sequence is that of Diaminopimelate epimerase from Rhodococcus jostii (strain RHA1).